The chain runs to 137 residues: MAEALYYGGRQRQEQPRSTQLVKATTAVVAGGSLLILAGLVLAGTVIGLTTITPLFVIFSPVLVPAVITVALLGLGFLASGGFGVAAITVLTWIYRYVTGKHPPGANQLDTARHKLMGKAREIKDFGQQQTSGAQAS.

The residue at position 2 (Ala-2) is an N-acetylalanine; alternate. 2 helical membrane passes run Ala-27–Ile-47 and Leu-55–Leu-75.

The protein belongs to the oleosin family. Expressed in seeds (at protein level).

Its subcellular location is the lipid droplet. It localises to the membrane. Its function is as follows. May have a structural role to stabilize the lipid body during desiccation of the seed by preventing coalescence of the oil. Probably interacts with both lipid and phospholipid moieties of lipid bodies. May also provide recognition signals for specific lipase anchorage in lipolysis during seedling growth. In Arachis hypogaea (Peanut), this protein is Oleosin Ara h 11.0101.